Consider the following 241-residue polypeptide: Phycocyanobilin:ferredoxin oxidoreductase (241 aa).

This sequence belongs to the HY2 family.

It carries out the reaction (2R,3Z)-phycocyanobilin + 4 oxidized [2Fe-2S]-[ferredoxin] = biliverdin IXalpha + 4 reduced [2Fe-2S]-[ferredoxin] + 4 H(+). Catalyzes the four-electron reduction of biliverdin IX-alpha (2-electron reduction at both the A and D rings); the reaction proceeds via an isolatable 2-electron intermediate, 181,182-dihydrobiliverdin. The protein is Phycocyanobilin:ferredoxin oxidoreductase of Prochlorococcus marinus (strain MIT 9215).